An 858-amino-acid chain; its full sequence is Zinc finger protein ZXDC (858 aa).

3 disordered regions span residues 1–73 (MDLP…GGDS), 85–108 (DTHG…PAAA), and 142–175 (AAPS…GSPA). Pro residues predominate over residues 59-68 (APGPSPPPPE). A compositionally biased stretch (low complexity) spans 142–152 (AAPSLHPATTP). 10 C2H2-type zinc fingers span residues 176–200 (YRCP…LLTH), 209–233 (FKCP…LQSH), 239–263 (FSCP…MKGH), 269–291 (FKCE…QRSH), 298–322 (YKCD…NRAH), 329–353 (FSCS…LRSH), 359–383 (FICD…KRKH), 389–413 (FTCP…SITH), 419–443 (FECP…SKKH), and 452–477 (SRCP…VRQH). The segment covering 624–634 (DSPALTPSNNL) has biased composition (polar residues). The segment at 624-652 (DSPALTPSNNLTAPGTTPTSSDTTQETGS) is disordered. The segment covering 635-651 (TAPGTTPTSSDTTQETG) has biased composition (low complexity). Residue Lys-661 forms a Glycyl lysine isopeptide (Lys-Gly) (interchain with G-Cter in SUMO) linkage. Disordered stretches follow at residues 671–714 (DVVQ…LESG) and 727–751 (VKKK…KVKG). Polar residues predominate over residues 681-692 (GPSQSVLSSSTE).

The protein belongs to the ZXD family. In terms of assembly, self-associates. Interacts with ZXDB and CIITA. Post-translationally, sumoylated at Lys-661 with SUMO1, SUMO2 and SUMO3; sumoylation enhances the activity of the transcriptional activation domain.

The protein resides in the nucleus. Its function is as follows. Cooperates with CIITA to promote transcription of MHC class I and MHC class II genes. This is Zinc finger protein ZXDC (Zxdc) from Mus musculus (Mouse).